Here is an 81-residue protein sequence, read N- to C-terminus: Defensin-like protein b (81 aa).

Residues 1-26 (MRNATFFIVFYVFISLVLSNVQDVTA) form the signal peptide. Cystine bridges form between cysteine 31/cysteine 81, cysteine 42/cysteine 66, cysteine 50/cysteine 76, and cysteine 64/cysteine 78.

The protein belongs to the DEFL family. Expressed in microspores and in young and mature anthers.

Its subcellular location is the secreted. Its function is as follows. Involved in self-incompatibility. The sequence is that of Defensin-like protein b (SCRb-1) from Arabidopsis lyrata (Lyre-leaved rock-cress).